The sequence spans 400 residues: Renin (400 aa).

The N-terminal stretch at 1-17 (MPLWGLLLALWGCSTFS) is a signal peptide. A propeptide spans 18-59 (LPADTAAFRRIFLKKMPSVRESLKERGVDMAQLGAEWSQLTK) (activation peptide). A glycan (N-linked (GlcNAc...) asparagine) is linked at asparagine 65. A Peptidase A1 domain is found at 80-397 (YYGEIGIGTP…DRRNNRIGFA (318 aa)). Aspartate 98 is an active-site residue. Cysteine 111 and cysteine 118 are joined by a disulfide. N-linked (GlcNAc...) asparagine glycosylation occurs at asparagine 135. Cysteine 277 and cysteine 281 are disulfide-bonded. Aspartate 286 is a catalytic residue. Cysteine 320 and cysteine 356 are joined by a disulfide. Asparagine 353 carries N-linked (GlcNAc...) asparagine glycosylation.

It belongs to the peptidase A1 family. In terms of assembly, interacts with ATP6AP2. In terms of tissue distribution, kidney.

Its subcellular location is the secreted. The protein localises to the membrane. The enzyme catalyses Cleavage of Leu-|-Xaa bond in angiotensinogen to generate angiotensin I.. Its activity is regulated as follows. Interaction with ATP6AP2 results in a 5-fold increased efficiency in angiotensinogen processing. In terms of biological role, renin is a highly specific endopeptidase, whose only known function is to generate angiotensin I from angiotensinogen in the plasma, initiating a cascade of reactions that produce an elevation of blood pressure and increased sodium retention by the kidney. The polypeptide is Renin (REN) (Ovis aries (Sheep)).